Here is a 158-residue protein sequence, read N- to C-terminus: MLP-like protein 43 (158 aa).

Alanine 2 is subject to N-acetylalanine.

This sequence belongs to the MLP family.

The protein is MLP-like protein 43 (MLP43) of Arabidopsis thaliana (Mouse-ear cress).